Here is a 673-residue protein sequence, read N- to C-terminus: NACHT, LRR and PYD domains-containing protein 10 (673 aa).

Residues 1–92 (MALARANSPQ…VDYLNQVCLN (92 aa)) form the Pyrin domain. Residues 163–469 (PIVVMQGSAG…AMSFLVKEDQ (307 aa)) enclose the NACHT domain. 169–176 (GSAGTGKT) is an ATP binding site. A disordered region spans residues 578–673 (SDKKKSVSVT…DGEMIDKMNG (96 aa)). Residues 584–597 (VSVTSSFSSGKVQS) show a composition bias toward low complexity. The span at 633–648 (ASREKGHMEMNDKEDG) shows a compositional bias: basic and acidic residues. The segment covering 649-658 (GVEEQEDEEG) has biased composition (acidic residues). The segment covering 659–673 (QTLKKDGEMIDKMNG) has biased composition (basic and acidic residues).

The protein belongs to the NLRP family. As to quaternary structure, oligomerizes. Interacts with PYCARD. Also interacts with CASP1 and IL1B. Interacts with NOD1 and components of the NOD1 signaling pathway including RIPK2, NR2C2/TAK1 and IKBKG/NEMO. As to expression, expressed in skin, tongue, heart, colon and several cell lines of hematopoietic and myocytic origin but not in kidney, skeletal muscle, spleen, liver, lung, thymus, brain or small intestine (at protein level).

It localises to the cytoplasm. The protein resides in the cell membrane. Functionally, inhibits autoprocessing of CASP1, CASP1-dependent IL1B secretion, PYCARD aggregation and PYCARD-mediated apoptosis but not apoptosis induced by FAS or BID. Displays anti-inflammatory activity. Required for immunity against C.albicans infection. Involved in the innate immune response by contributing to pro-inflammatory cytokine release in response to invasive bacterial infection. Contributes to T-cell-mediated inflammatory responses in the skin. Plays a role in protection against periodontitis through its involvement in induction of IL1A via ERK activation in oral epithelial cells infected with periodontal pathogens. Exhibits both ATPase and GTPase activities. This is NACHT, LRR and PYD domains-containing protein 10 (Nlrp10) from Mus musculus (Mouse).